A 168-amino-acid chain; its full sequence is ATP synthase subunit b (168 aa).

Residues 9 to 29 (AIPFGTIAYTLFIFLLLLVML) traverse the membrane as a helical segment.

This sequence belongs to the ATPase B chain family. F-type ATPases have 2 components, F(1) - the catalytic core - and F(0) - the membrane proton channel. F(1) has five subunits: alpha(3), beta(3), gamma(1), delta(1), epsilon(1). F(0) has three main subunits: a(1), b(2) and c(10-14). The alpha and beta chains form an alternating ring which encloses part of the gamma chain. F(1) is attached to F(0) by a central stalk formed by the gamma and epsilon chains, while a peripheral stalk is formed by the delta and b chains.

The protein resides in the cell membrane. Functionally, f(1)F(0) ATP synthase produces ATP from ADP in the presence of a proton or sodium gradient. F-type ATPases consist of two structural domains, F(1) containing the extramembraneous catalytic core and F(0) containing the membrane proton channel, linked together by a central stalk and a peripheral stalk. During catalysis, ATP synthesis in the catalytic domain of F(1) is coupled via a rotary mechanism of the central stalk subunits to proton translocation. Its function is as follows. Component of the F(0) channel, it forms part of the peripheral stalk, linking F(1) to F(0). This Bacillus cereus (strain ATCC 10987 / NRS 248) protein is ATP synthase subunit b.